The primary structure comprises 160 residues: MLNIRILVVGKIKEKYFRNALDQYLKRLSRFTKIEIIEVKDEATPEKASKSENLEILQTEGGRLLDKINNRDFVIALAIEGKLITSPDLADMIREIPLDGYSTIDFVIGGSLGLSNEIKNRANAKISFGRITLPHQLARVLLTEQIYRSFMINEGSPYHK.

S-adenosyl-L-methionine contacts are provided by residues L77, G109, and 128–133 (FGRITL).

It belongs to the RNA methyltransferase RlmH family. Homodimer.

The protein localises to the cytoplasm. It carries out the reaction pseudouridine(1915) in 23S rRNA + S-adenosyl-L-methionine = N(3)-methylpseudouridine(1915) in 23S rRNA + S-adenosyl-L-homocysteine + H(+). Its function is as follows. Specifically methylates the pseudouridine at position 1915 (m3Psi1915) in 23S rRNA. This chain is Ribosomal RNA large subunit methyltransferase H, found in Oenococcus oeni (strain ATCC BAA-331 / PSU-1).